A 953-amino-acid chain; its full sequence is Zinc finger CCCH domain-containing protein 18 (953 aa).

M1 carries the post-translational modification N-acetylmethionine. Basic and acidic residues predominate over residues 1 to 14; that stretch reads MDVAESPERDPHSP. 2 disordered regions span residues 1 to 222 and 391 to 928; these read MDVA…RPRP and QYTE…LSRR. A Phosphoserine modification is found at S6. Residues 15–26 are compositionally biased toward acidic residues; it reads EDEEQPQGLSDD. Phosphoserine occurs at positions 34, 46, 53, 59, 67, 74, 78, 83, and 95. A compositionally biased stretch (acidic residues) spans 60–72; that stretch reads QEEEDNHSDEEDR. Over residues 97–106 the composition is skewed to acidic residues; it reads CEEEGDEGEE. A coiled-coil region spans residues 105 to 134; that stretch reads EEDRTSDLRDEASSVTRELDEHELDYDEEV. The segment covering 107–124 has biased composition (basic and acidic residues); it reads DRTSDLRDEASSVTRELD. T109 is modified (phosphothreonine). S110 and S118 each carry phosphoserine. 2 stretches are compositionally biased toward acidic residues: residues 125–136 and 143–158; these read EHELDYDEEVPE and QEDE…DEEK. Over residues 159-168 the composition is skewed to basic and acidic residues; that stretch reads GEGTPREEGK. T162 is subject to Phosphothreonine. A phosphoserine mark is found at S173 and S179. Residues 175 to 190 show a composition bias toward basic and acidic residues; the sequence is GEKESLEAAKEKKKED. Residues 191-207 show a composition bias toward acidic residues; the sequence is DDGEIDDGEIDDDDLEE. A compositionally biased stretch (basic and acidic residues) spans 208-217; it reads GEVKDPSDRK. The C3H1-type zinc finger occupies 219-245; the sequence is RPRPTCRFFMKGNCTWGMNCRFIHPGV. A compositionally biased stretch (basic and acidic residues) spans 396-482; the sequence is EPYHNYRERE…EKEREKEKGK (87 aa). A coiled-coil region spans residues 399 to 464; it reads HNYRERERER…RERAKRDEKD (66 aa). S487 is modified (phosphoserine). Residue K510 forms a Glycyl lysine isopeptide (Lys-Gly) (interchain with G-Cter in SUMO2) linkage. Over residues 510–520 the composition is skewed to basic and acidic residues; it reads KRADEWKDPWR. 3 positions are modified to phosphoserine: S532, S534, and S536. Positions 545–606 are enriched in low complexity; the sequence is SASSASASNS…SRSRSFSSSP (62 aa). Residues K622 and K661 each participate in a glycyl lysine isopeptide (Lys-Gly) (interchain with G-Cter in SUMO2) cross-link. Over residues 661 to 670 the composition is skewed to basic and acidic residues; that stretch reads KPGDPREARR. Low complexity-rich tracts occupy residues 692–725 and 736–750; these read GSSY…SAHS and ASPV…PAPA. Residues 760-774 show a composition bias toward basic and acidic residues; sequence KKEDGVKEEKRKRDS. Residue K766 forms a Glycyl lysine isopeptide (Lys-Gly) (interchain with G-Cter in SUMO2) linkage. Over residues 778 to 798 the composition is skewed to low complexity; sequence PPKSAKPPAGGKSSQQPSTPQ. K814 carries the post-translational modification N6-acetyllysine. A Glycyl lysine isopeptide (Lys-Gly) (interchain with G-Cter in SUMO2) cross-link involves residue K817. The span at 824–841 shows a compositional bias: basic and acidic residues; it reads AADKGSRKRYEPSDKDRQ. S842, S852, S868, S893, and S896 each carry phosphoserine. Residues 893–906 are compositionally biased toward low complexity; sequence SPQSKSSSKVTSVP. Residue K908 forms a Glycyl lysine isopeptide (Lys-Gly) (interchain with G-Cter in SUMO2) linkage. Positions 916–925 are enriched in polar residues; that stretch reads STKSGKASTL. A coiled-coil region spans residues 921-950; sequence KASTLSRREELLKQLKAVEDAIARKRAKIP.

In terms of assembly, interacts with ZFC3H1 in a RNase-insensitive manner.

Its subcellular location is the nucleus. This is Zinc finger CCCH domain-containing protein 18 from Homo sapiens (Human).